A 104-amino-acid polypeptide reads, in one-letter code: Large ribosomal subunit protein eL31 (104 aa).

Belongs to the eukaryotic ribosomal protein eL31 family.

The sequence is that of Large ribosomal subunit protein eL31 (rpl31e) from Aeropyrum pernix (strain ATCC 700893 / DSM 11879 / JCM 9820 / NBRC 100138 / K1).